The primary structure comprises 24 residues: Aldehyde dehydrogenase gamma chain (24 aa).

As to quaternary structure, heterotrimer composed of an alpha, a beta and a gamma chain. The cofactor is [2Fe-2S] cluster.

The catalysed reaction is an aldehyde + a quinone + H2O = a quinol + a carboxylate + H(+). This Comamonas testosteroni (Pseudomonas testosteroni) protein is Aldehyde dehydrogenase gamma chain.